We begin with the raw amino-acid sequence, 676 residues long: E3 ubiquitin-protein ligase ICP0 (676 aa).

The RING-type zinc finger occupies 13-52; sequence CCICLDAITGAARALPCLHAFCLACIRRWLEGRPTCPLCK. Disordered regions lie at residues 101 to 135, 266 to 486, and 555 to 676; these read DLTA…EAAG, HLIP…PAPI, and AAIS…AWRQ. Residues 110 to 135 show a composition bias toward gly residues; it reads PGAGGEAGAAGGSEAGGGAGGAEAAG. Residues 286–303 are compositionally biased toward acidic residues; the sequence is SDSDSEGSEDDSWSESEE. The span at 304–314 shows a compositional bias: low complexity; it reads SSSGLSTSDLT. Over residues 315–328 the composition is skewed to acidic residues; sequence AIDDTETEPETDAE. The segment covering 351–361 has biased composition (polar residues); that stretch reads YVSTRGRQTPA. 2 stretches are compositionally biased toward low complexity: residues 375–388 and 397–411; these read GRAA…SSRS and LPAA…QARA. Positions 422 to 439 are enriched in gly residues; that stretch reads GAGLGVAAGETAGWGVGS. Residues 440–450 are compositionally biased toward basic and acidic residues; that stretch reads EEGRGERRAKL. Residues 474–484 are compositionally biased toward pro residues; it reads TPAPAPAPAPA. Residues 555–597 are compositionally biased toward low complexity; that stretch reads AAISTRAPTPSPAGRAPAADPRRAGAPALAGAARAEAGRNGNP.

In terms of processing, auto-ubiquitinated. Post-translationally, the strongly acidic region might serve as a transcriptional activation domain, possibly regulated through phosphorylation by casein kinase II.

It catalyses the reaction S-ubiquitinyl-[E2 ubiquitin-conjugating enzyme]-L-cysteine + [acceptor protein]-L-lysine = [E2 ubiquitin-conjugating enzyme]-L-cysteine + N(6)-ubiquitinyl-[acceptor protein]-L-lysine.. Functionally, evades nuclear antiviral defenses triggered by dsDNA viruses. Acts during the initial stages of lytic infection and the reactivation of latent viral genome. Prevents the antiviral effect of nuclear bodies by degrading host PML and SP100. The polypeptide is E3 ubiquitin-protein ligase ICP0 (BICP0) (Bos taurus (Bovine)).